The chain runs to 319 residues: MVVLVDTVSANPVRPRHPEKAARPDALSPKKPDWIRVRAPTTRGYGETRGIVKENGLHTVCEEAGCPNIGECWDKKHATFMIMGDTCTRACAFCNVKTGMPGALDANEPAYVAEATRKLGLQHLVITSVDRDDLADGGAAHFAATIRAVREACPTTTIEILTPDFLRKDGALEVVVAAKPDVFNHNLETVPSRYLSVRPGARYFHSIRLLQRVKELDPSIFTKSGIMVGLGEERHEVLQVMDDLRSAEVDFLTIGQYLQPTRKHHAVMRYVTPDEFAGYQTTAYAKGFLMVSASPMTRSSHHAGDDFAKLKAARAARAR.

The tract at residues 6–29 (DTVSANPVRPRHPEKAARPDALSP) is disordered. A compositionally biased stretch (basic and acidic residues) spans 16–29 (RHPEKAARPDALSP). Cys-61, Cys-66, Cys-72, Cys-87, Cys-91, Cys-94, and Ser-300 together coordinate [4Fe-4S] cluster. Residues 73 to 289 (WDKKHATFMI…QTTAYAKGFL (217 aa)) enclose the Radical SAM core domain.

It belongs to the radical SAM superfamily. Lipoyl synthase family. Requires [4Fe-4S] cluster as cofactor.

The protein localises to the cytoplasm. It carries out the reaction [[Fe-S] cluster scaffold protein carrying a second [4Fe-4S](2+) cluster] + N(6)-octanoyl-L-lysyl-[protein] + 2 oxidized [2Fe-2S]-[ferredoxin] + 2 S-adenosyl-L-methionine + 4 H(+) = [[Fe-S] cluster scaffold protein] + N(6)-[(R)-dihydrolipoyl]-L-lysyl-[protein] + 4 Fe(3+) + 2 hydrogen sulfide + 2 5'-deoxyadenosine + 2 L-methionine + 2 reduced [2Fe-2S]-[ferredoxin]. It functions in the pathway protein modification; protein lipoylation via endogenous pathway; protein N(6)-(lipoyl)lysine from octanoyl-[acyl-carrier-protein]: step 2/2. Functionally, catalyzes the radical-mediated insertion of two sulfur atoms into the C-6 and C-8 positions of the octanoyl moiety bound to the lipoyl domains of lipoate-dependent enzymes, thereby converting the octanoylated domains into lipoylated derivatives. This is Lipoyl synthase from Rhodopseudomonas palustris (strain ATCC BAA-98 / CGA009).